The following is a 257-amino-acid chain: UPF0246 protein BF4021 (257 aa).

Belongs to the UPF0246 family.

This Bacteroides fragilis (strain YCH46) protein is UPF0246 protein BF4021.